Reading from the N-terminus, the 401-residue chain is Chalcone synthase 4 (401 aa).

Cysteine 168 is a catalytic residue.

The protein belongs to the thiolase-like superfamily. Chalcone/stilbene synthases family.

The enzyme catalyses (E)-4-coumaroyl-CoA + 3 malonyl-CoA + 3 H(+) = 2',4,4',6'-tetrahydroxychalcone + 3 CO2 + 4 CoA. The protein operates within secondary metabolite biosynthesis; flavonoid biosynthesis. Functionally, the primary product of this enzyme is 4,2',4',6'-tetrahydroxychalcone (also termed naringenin-chalcone or chalcone) which can under specific conditions spontaneously isomerize into naringenin. The protein is Chalcone synthase 4 (CHS4) of Sorghum bicolor (Sorghum).